A 241-amino-acid polypeptide reads, in one-letter code: MSEQDKKQAAIKAAQAAADAVREAQAALAEEGRLLFKKSWIFIRGVPSMKFLPPEGPVEIAFAGRSNVGKSSLINALVGKKGLARTSNTPGRTQELNYFVPDGYSGENGDLPPLALVDMPGYGFAEAPKAQVDAWTRLVFDYLRGRTTLKRVYVLIDARHGIKKNDAEVLDLLDKAAVSYQIVLTKIDKIKPAGVPRLLEETHKLTYKRAACFPGIIATSSEKGQGLDDLRAAIALLLKEY.

Positions Gly56–Glu240 constitute an EngB-type G domain. GTP is bound by residues Gly64–Ser71, Gly91–Glu95, Asp118–Gly121, Thr185–Asp188, and Thr219–Ser221. Positions 71 and 93 each coordinate Mg(2+).

This sequence belongs to the TRAFAC class TrmE-Era-EngA-EngB-Septin-like GTPase superfamily. EngB GTPase family. The cofactor is Mg(2+).

In terms of biological role, necessary for normal cell division and for the maintenance of normal septation. The sequence is that of Probable GTP-binding protein EngB from Brucella suis biovar 1 (strain 1330).